A 545-amino-acid polypeptide reads, in one-letter code: T-complex protein 1 subunit gamma (545 aa).

The residue at position 1 (methionine 1) is an N-acetylmethionine. A disordered region spans residues methionine 1–serine 24. Residue serine 11 is modified to Phosphoserine. Lysine 15 participates in a covalent cross-link: Glycyl lysine isopeptide (Lys-Gly) (interchain with G-Cter in SUMO2). ADP-binding residues include glycine 42, glycine 94, threonine 95, threonine 96, serine 97, threonine 162, and lysine 163. ATP-binding residues include glycine 42, glycine 94, threonine 95, and threonine 96. Phosphoserine is present on serine 170. Lysine 222 is subject to N6-acetyllysine. Phosphoserine occurs at positions 243 and 244. Residue tyrosine 247 is modified to Phosphotyrosine. Glycyl lysine isopeptide (Lys-Gly) (interchain with G-Cter in SUMO2) cross-links involve residues lysine 248 and lysine 249. Serine 252 is subject to Phosphoserine. Cysteine 366 and cysteine 372 are disulfide-bonded. A Glycyl lysine isopeptide (Lys-Gly) (interchain with G-Cter in SUMO2) cross-link involves residue lysine 381. Glycine 411 lines the ADP pocket. Glycine 411 lines the ATP pocket. Threonine 430 and threonine 459 each carry phosphothreonine. The ADP site is built by glycine 482, glutamate 483, glutamate 497, and lysine 502. Glycine 482 is a binding site for ATP. Glutamate 497 lines the ATP pocket. The segment at histidine 526–glutamate 545 is disordered.

This sequence belongs to the TCP-1 chaperonin family. Component of the chaperonin-containing T-complex (TRiC), a hexadecamer composed of two identical back-to-back stacked rings enclosing a protein folding chamber. Each ring is made up of eight different subunits: TCP1/CCT1, CCT2, CCT3, CCT4, CCT5, CCT6A/CCT6, CCT7, CCT8. Interacts with PACRG. Interacts with DNAAF4. Interacts with DLEC1.

Its subcellular location is the cytoplasm. The catalysed reaction is ATP + H2O = ADP + phosphate + H(+). Its function is as follows. Component of the chaperonin-containing T-complex (TRiC), a molecular chaperone complex that assists the folding of actin, tubulin and other proteins upon ATP hydrolysis. The TRiC complex mediates the folding of WRAP53/TCAB1, thereby regulating telomere maintenance. As part of the TRiC complex may play a role in the assembly of BBSome, a complex involved in ciliogenesis regulating transports vesicles to the cilia. The protein is T-complex protein 1 subunit gamma (CCT3) of Macaca fascicularis (Crab-eating macaque).